Reading from the N-terminus, the 554-residue chain is Valerianol synthase TPS8 (554 aa).

Positions 288 to 292 (QHSVG) match the DDXXD motif motif. Mg(2+) contacts are provided by D307, D311, D452, S456, and E460.

This sequence belongs to the terpene synthase family. It depends on Mg(2+) as a cofactor.

It carries out the reaction (2E,6E)-farnesyl diphosphate + H2O = valerianol + diphosphate. It functions in the pathway secondary metabolite biosynthesis; terpenoid biosynthesis. In terms of biological role, terpene synthase that catalyzes the biosynthesis of the terpene valerianol. The sequence is that of Valerianol synthase TPS8 from Camellia sinensis (Tea plant).